The primary structure comprises 619 residues: Very-long-chain aldehyde decarbonylase GL1-4 (619 aa).

The next 5 helical transmembrane spans lie at Ile-45–Ile-65, Gly-94–Pro-114, Gly-126–His-146, Phe-178–Leu-198, and Ala-325–Tyr-345. The Fatty acid hydroxylase domain occupies Val-138–Thr-272.

The protein belongs to the sterol desaturase family. In terms of assembly, homodimer.

It is found in the endoplasmic reticulum membrane. It catalyses the reaction a long-chain fatty aldehyde + 2 NADPH + O2 + H(+) = a long-chain alkane + formate + 2 NADP(+) + H2O. Aldehyde decarbonylase involved in the conversion of aldehydes to alkanes. Core component of a very-long-chain alkane synthesis complex. This is Very-long-chain aldehyde decarbonylase GL1-4 from Oryza sativa subsp. indica (Rice).